A 167-amino-acid polypeptide reads, in one-letter code: NAD(P)H-quinone oxidoreductase subunit J (167 aa).

Belongs to the complex I 30 kDa subunit family. As to quaternary structure, NDH-1 can be composed of about 15 different subunits; different subcomplexes with different compositions have been identified which probably have different functions.

It localises to the cellular thylakoid membrane. The enzyme catalyses a plastoquinone + NADH + (n+1) H(+)(in) = a plastoquinol + NAD(+) + n H(+)(out). It catalyses the reaction a plastoquinone + NADPH + (n+1) H(+)(in) = a plastoquinol + NADP(+) + n H(+)(out). Functionally, NDH-1 shuttles electrons from an unknown electron donor, via FMN and iron-sulfur (Fe-S) centers, to quinones in the respiratory and/or the photosynthetic chain. The immediate electron acceptor for the enzyme in this species is believed to be plastoquinone. Couples the redox reaction to proton translocation, and thus conserves the redox energy in a proton gradient. Cyanobacterial NDH-1 also plays a role in inorganic carbon-concentration. This Trichodesmium erythraeum (strain IMS101) protein is NAD(P)H-quinone oxidoreductase subunit J.